Reading from the N-terminus, the 165-residue chain is Transmembrane protein 128 (165 aa).

The next 4 helical transmembrane spans lie at 49–69 (NIHS…VDFF), 81–101 (WFLF…YCIV), 119–139 (LIPI…VALW), and 144–164 (FFTP…TSLL).

The protein localises to the membrane. The protein is Transmembrane protein 128 (TMEM128) of Bos taurus (Bovine).